A 193-amino-acid polypeptide reads, in one-letter code: Peptidyl-tRNA hydrolase (193 aa).

Tyr18 serves as a coordination point for tRNA. Residue His23 is the Proton acceptor of the active site. TRNA is bound by residues Phe69, Asn71, and Asn117.

The protein belongs to the PTH family. In terms of assembly, monomer.

The protein resides in the cytoplasm. It catalyses the reaction an N-acyl-L-alpha-aminoacyl-tRNA + H2O = an N-acyl-L-amino acid + a tRNA + H(+). Its function is as follows. Hydrolyzes ribosome-free peptidyl-tRNAs (with 1 or more amino acids incorporated), which drop off the ribosome during protein synthesis, or as a result of ribosome stalling. Functionally, catalyzes the release of premature peptidyl moieties from peptidyl-tRNA molecules trapped in stalled 50S ribosomal subunits, and thus maintains levels of free tRNAs and 50S ribosomes. This Teredinibacter turnerae (strain ATCC 39867 / T7901) protein is Peptidyl-tRNA hydrolase.